A 173-amino-acid chain; its full sequence is Trafficking regulator of GLUT4 1 (173 aa).

Residues 1-10 (MANPAQPPLQ) show a composition bias toward pro residues. The interval 1–20 (MANPAQPPLQDPGSTSPLEL) is disordered. The Cytoplasmic portion of the chain corresponds to 1–102 (MANPAQPPLQ…QDQEAPKDYL (102 aa)). 6 positions are modified to phosphoserine: Ser16, Ser43, Ser45, Ser70, Ser84, and Ser85. Residues 103–123 (VLAIASCFCPVWPLNLIPLIF) constitute an intramembrane region (helical). Topologically, residues 124-150 (SIMSRSSVQQGDLDGARRLGRLARLLS) are cytoplasmic. The chain crosses the membrane as a helical span at residues 151-171 (ITFIILGIVIIIVAVTVNFTV). Over 172-173 (PK) the chain is Extracellular.

Belongs to the CD225/Dispanin family. In terms of assembly, interacts with SLC2A4; the interaction is required for proper SLC2A4 reacycling after insulin stimulation. In terms of tissue distribution, expressed specifically in white and brown adipose tissues.

The protein localises to the cell membrane. It is found in the endomembrane system. It localises to the cytoplasm. The protein resides in the perinuclear region. Regulates insulin-mediated adipose tissue glucose uptake and transport by modulation of SLC2A4 recycling. Not required for SLC2A4 membrane fusion upon an initial stimulus, but rather is necessary for proper protein recycling during prolonged insulin stimulation. The polypeptide is Trafficking regulator of GLUT4 1 (Trarg1) (Mus musculus (Mouse)).